We begin with the raw amino-acid sequence, 203 residues long: Snake venom metalloproteinase adamalysin-2 (203 aa).

One can recognise a Peptidase M12B domain in the interval 7–203 (RYIELVVVAD…YKPQCILNKP (197 aa)). Glu-10 and Asp-94 together coordinate Ca(2+). 2 disulfide bridges follow: Cys-118–Cys-198 and Cys-158–Cys-165. Residue His-143 coordinates Zn(2+). Residue Glu-144 is part of the active site. Zn(2+) contacts are provided by His-147 and His-153. Ca(2+) contacts are provided by Cys-198 and Asn-201.

The protein belongs to the venom metalloproteinase (M12B) family. P-I subfamily. Monomer. Zn(2+) is required as a cofactor. As to expression, expressed by the venom gland.

Its subcellular location is the secreted. It catalyses the reaction Cleavage of 1-Phe-|-Val-2, 5-His-|-Leu-6, 14-Ala-|-Leu-15, 15-Leu-|-Tyr-16, and 16-Tyr-|-Leu-17 of insulin B chain.. In terms of biological role, has no significant hemorrhagic activity, but inactivates serpins by limited proteolysis of their reactive-site loops. The sequence is that of Snake venom metalloproteinase adamalysin-2 from Crotalus adamanteus (Eastern diamondback rattlesnake).